We begin with the raw amino-acid sequence, 362 residues long: Ferrochelatase (362 aa).

Fe cation-binding residues include H228 and E309.

This sequence belongs to the ferrochelatase family.

The protein localises to the cytoplasm. It catalyses the reaction heme b + 2 H(+) = protoporphyrin IX + Fe(2+). It functions in the pathway porphyrin-containing compound metabolism; protoheme biosynthesis; protoheme from protoporphyrin-IX: step 1/1. Its function is as follows. Catalyzes the ferrous insertion into protoporphyrin IX. The polypeptide is Ferrochelatase (Bordetella parapertussis (strain 12822 / ATCC BAA-587 / NCTC 13253)).